The sequence spans 57 residues: uncharacterized protein (57 aa).

A disordered region spans residues 1–57 (MPHYVVVKSPMRRRRSPRRRSPRVCYSPRRVACSPRRRSPRRRSPRRRSPRRSIVVY). Over residues 10-22 (PMRRRRSPRRRSP) the composition is skewed to basic residues. The span at 23–34 (RVCYSPRRVACS) shows a compositional bias: low complexity. Residues 35–51 (PRRRSPRRRSPRRRSPR) show a composition bias toward basic residues.

This is an uncharacterized protein from Acheta domesticus (House cricket).